Consider the following 118-residue polypeptide: UPF0342 protein BpOF4_11360 (118 aa).

This sequence belongs to the UPF0342 family.

This Alkalihalophilus pseudofirmus (strain ATCC BAA-2126 / JCM 17055 / OF4) (Bacillus pseudofirmus) protein is UPF0342 protein BpOF4_11360.